A 391-amino-acid chain; its full sequence is Somatostatin receptor type 1 (391 aa).

A disordered region spans residues 1-50; the sequence is MFPNGTASSPSSSPSPSPGSCGEGACSRGPGSGAADGMEEPGRNASQNGT. At 1-56 the chain is on the extracellular side; that stretch reads MFPNGTASSPSSSPSPSPGSCGEGACSRGPGSGAADGMEEPGRNASQNGTLSEGQG. N-linked (GlcNAc...) asparagine glycosylation occurs at Asn4. The span at 8–20 shows a compositional bias: low complexity; the sequence is SSPSSSPSPSPGS. N-linked (GlcNAc...) asparagine glycosylation is found at Asn44 and Asn48. Residues 57–84 form a helical membrane-spanning segment; the sequence is SAILISFIYSVVCLVGLCGNSMVIYVIL. At 85 to 94 the chain is on the cytoplasmic side; it reads RYAKMKTATN. Residues 95–120 traverse the membrane as a helical segment; the sequence is IYILNLAIADELLMLSVPFLVTSTLL. At 121-131 the chain is on the extracellular side; the sequence is RHWPFGALLCR. An intrachain disulfide couples Cys130 to Cys208. Residues 132–153 traverse the membrane as a helical segment; the sequence is LVLSVDAVNMFTSIYCLTVLSV. Over 154-175 the chain is Cytoplasmic; the sequence is DRYVAVVHPIKAARYRRPTVAK. The helical transmembrane segment at 176–196 threads the bilayer; the sequence is VVNLGVWVLSLLVILPIVVFS. Residues 197 to 219 are Extracellular-facing; the sequence is RTAANSDGTVACNMLMPEPAQRW. Residues 220–244 form a helical membrane-spanning segment; sequence LVGFVLYTFLMGFLLPVGAICLCYV. Residues 245–270 lie on the Cytoplasmic side of the membrane; that stretch reads LIIAKMRMVALKAGWQQRKRSERKIT. The helical transmembrane segment at 271–296 threads the bilayer; the sequence is LMVMMVVMVFVICWMPFYVVQLVNVF. Topologically, residues 297–303 are extracellular; that stretch reads AEQDDAT. Residues 304–327 traverse the membrane as a helical segment; that stretch reads VSQLSVILGYANSCANPILYGFLS. Over 328 to 391 the chain is Cytoplasmic; it reads DNFKRSFQRI…GTCASRISTL (64 aa). Cys339 carries S-palmitoyl cysteine lipidation.

The protein belongs to the G-protein coupled receptor 1 family. As to expression, jejunum and stomach.

Its subcellular location is the cell membrane. Its function is as follows. Receptor for somatostatin with higher affinity for somatostatin-14 than -28. This receptor is coupled via pertussis toxin sensitive G proteins to inhibition of adenylyl cyclase. In addition it stimulates phosphotyrosine phosphatase and Na(+)/H(+) exchanger via pertussis toxin insensitive G proteins. This chain is Somatostatin receptor type 1 (Sstr1), found in Mus musculus (Mouse).